We begin with the raw amino-acid sequence, 316 residues long: Arginine transport system permease protein ArgU (316 aa).

A compositionally biased stretch (polar residues) spans 1–14 (MSDLNQGPGASTAQ). The interval 1-20 (MSDLNQGPGASTAQPKPIEA) is disordered. The next 6 membrane-spanning stretches (helical) occupy residues 29-49 (WVAA…ALNN), 74-94 (IALT…LAVM), 108-128 (LYLW…WGLL), 151-171 (MFLL…AEIV), 217-237 (LISM…LELY), and 251-271 (VPML…LMVG). Residues 70-274 (ALHTIALTLL…TSILMVGQYY (205 aa)) form the ABC transmembrane type-1 domain.

The protein belongs to the binding-protein-dependent transport system permease family. The complex is probably composed of two ATP-binding proteins (ArgV), two transmembrane proteins (ArgU) and a solute-binding protein (ArgT).

It is found in the cell membrane. In terms of biological role, part of the ABC transporter complex ArgTUV involved in L-arginine import. May also transport L-citrulline. Probably responsible for the translocation of the substrate across the membrane. The sequence is that of Arginine transport system permease protein ArgU from Corynebacterium glutamicum (strain ATCC 13032 / DSM 20300 / JCM 1318 / BCRC 11384 / CCUG 27702 / LMG 3730 / NBRC 12168 / NCIMB 10025 / NRRL B-2784 / 534).